The sequence spans 163 residues: Putative pre-16S rRNA nuclease (163 aa).

It belongs to the YqgF nuclease family.

It is found in the cytoplasm. In terms of biological role, could be a nuclease involved in processing of the 5'-end of pre-16S rRNA. The sequence is that of Putative pre-16S rRNA nuclease from Chlamydia caviae (strain ATCC VR-813 / DSM 19441 / 03DC25 / GPIC) (Chlamydophila caviae).